Reading from the N-terminus, the 124-residue chain is Glycine cleavage system H protein (124 aa).

In terms of domain architecture, Lipoyl-binding spans 22–104; it reads LIVTGISDHA…YGKGWIYKMK (83 aa). Lys-63 is modified (N6-lipoyllysine).

This sequence belongs to the GcvH family. The glycine cleavage system is composed of four proteins: P, T, L and H. (R)-lipoate is required as a cofactor.

In terms of biological role, the glycine cleavage system catalyzes the degradation of glycine. The H protein shuttles the methylamine group of glycine from the P protein to the T protein. The sequence is that of Glycine cleavage system H protein from Acinetobacter baylyi (strain ATCC 33305 / BD413 / ADP1).